Here is a 586-residue protein sequence, read N- to C-terminus: MRKHPQTATKHLFVSGGVASSLGKGLTASSLGQLLTVRGLHVTMQKLDPYLNVDPGTMNPFQHGEVFVTEDGAETDLDVGHYERFLDRNLPGSANVTTGQVYSTVIAKERRGEYLGDTVQVIPHITDEIKRRILAMAQPDADGNRPDVVITEIGGTVGDIESQPFLEAARQVRHYLGREDVFFLHVSLVPYLAPSGELKTKPTQHSVAALRSIGITPDALILRCDRDVPEALKNKIALMCDVDIDGVISTPDAPSIYDIPKVLHREELDAFVVRRLNLPFRDVDWTEWDDLVRRVHEPHETVRIALVGKYVELSDAYLSVAEALRAGGFKHRAKVEICWVASDGCETTSGAAAALGDVHGVLIPGGFGIRGIEGKIGAIAYARARGLPVLGLCLGLQCIVIEAARSVGLTNANSAEFDPDTPDPVIATMPDQEEIVAGEADLGGTMRLGSYPAVLEPDSVVAQAYQTTQVSERHRHRYEVNNAYRDKIAESGLRFSGTSPDGHLVEFVEYPPDRHPFVVGTQAHPELKSRPTRPHPLFVAFVGAAIDYKAGELLPVEIPEIPEHTPNGSSHRDGVGQPLPEPASRG.

The amidoligase domain stretch occupies residues 1-278; the sequence is MRKHPQTATK…DAFVVRRLNL (278 aa). Position 20 (Ser-20) interacts with CTP. UTP is bound at residue Ser-20. ATP-binding positions include 21–26 and Asp-78; that span reads SLGKGL. Mg(2+) contacts are provided by Asp-78 and Glu-152. CTP is bound by residues 159–161, 199–204, and Lys-235; these read DIE and KTKPTQ. UTP contacts are provided by residues 199 to 204 and Lys-235; that span reads KTKPTQ. The Glutamine amidotransferase type-1 domain maps to 303–551; sequence RIALVGKYVE…VGAAIDYKAG (249 aa). An L-glutamine-binding site is contributed by Gly-366. The active-site Nucleophile; for glutamine hydrolysis is the Cys-393. Residues 394–397, Glu-416, and Arg-477 contribute to the L-glutamine site; that span reads LGLQ. Active-site residues include His-524 and Glu-526. A disordered region spans residues 560-586; sequence EIPEHTPNGSSHRDGVGQPLPEPASRG.

The protein belongs to the CTP synthase family. As to quaternary structure, homotetramer.

The catalysed reaction is UTP + L-glutamine + ATP + H2O = CTP + L-glutamate + ADP + phosphate + 2 H(+). It carries out the reaction L-glutamine + H2O = L-glutamate + NH4(+). The enzyme catalyses UTP + NH4(+) + ATP = CTP + ADP + phosphate + 2 H(+). It participates in pyrimidine metabolism; CTP biosynthesis via de novo pathway; CTP from UDP: step 2/2. Its activity is regulated as follows. Allosterically activated by GTP, when glutamine is the substrate; GTP has no effect on the reaction when ammonia is the substrate. The allosteric effector GTP functions by stabilizing the protein conformation that binds the tetrahedral intermediate(s) formed during glutamine hydrolysis. Inhibited by the product CTP, via allosteric rather than competitive inhibition. Its function is as follows. Catalyzes the ATP-dependent amination of UTP to CTP with either L-glutamine or ammonia as the source of nitrogen. Regulates intracellular CTP levels through interactions with the four ribonucleotide triphosphates. This chain is CTP synthase, found in Mycobacterium tuberculosis (strain CDC 1551 / Oshkosh).